The sequence spans 408 residues: Energy-coupling factor transporter ATP-binding protein EcfA1 (408 aa).

The ABC transporter domain occupies 140 to 374 (IEIKNLSFKY…KEFLRNIQLD (235 aa)). 174–181 (GHNGSGKS) provides a ligand contact to ATP.

It belongs to the ABC transporter superfamily. Energy-coupling factor EcfA family. Forms a stable energy-coupling factor (ECF) transporter complex composed of 2 membrane-embedded substrate-binding proteins (S component), 2 ATP-binding proteins (A component) and 2 transmembrane proteins (T component).

The protein localises to the cell membrane. Its function is as follows. ATP-binding (A) component of a common energy-coupling factor (ECF) ABC-transporter complex. Unlike classic ABC transporters this ECF transporter provides the energy necessary to transport a number of different substrates. In Mycoplasma capricolum subsp. capricolum (strain California kid / ATCC 27343 / NCTC 10154), this protein is Energy-coupling factor transporter ATP-binding protein EcfA1.